A 375-amino-acid polypeptide reads, in one-letter code: DNA replication and repair protein RecF (375 aa).

30-37 (GENAQGKT) contacts ATP.

The protein belongs to the RecF family.

The protein resides in the cytoplasm. Its function is as follows. The RecF protein is involved in DNA metabolism; it is required for DNA replication and normal SOS inducibility. RecF binds preferentially to single-stranded, linear DNA. It also seems to bind ATP. The sequence is that of DNA replication and repair protein RecF from Bacillus cereus (strain B4264).